A 237-amino-acid chain; its full sequence is Protein ULTRAPETALA 1 (237 aa).

In terms of domain architecture, SAND spans 18–116 (EELQEMSGVN…SKTVLLKYYN (99 aa)). A CW-type zinc finger spans residues 133-191 (VCHRDEFVGCNDCGKERRFRLRSRDECRLHHNAMGDPNWKCSDFPYDKITCEEEEERGS).

As to quaternary structure, interacts with HHO5. Associates with ATX1 for trimethylating 'Lys-4' on histone H3 (H3K4me3) at flower MADS box gene loci. In terms of tissue distribution, expressed at low levels in seedlings, roots, shoots, leaves, stems, inflorescences, pollen, flowers and siliques, with highest levels dividing tissues including inflorescence.

It localises to the cytoplasm. It is found in the nucleus. Functionally, putative transcription factor that acts as a key negative regulator of cell accumulation in shoot and floral meristems. Negatively regulates the size of the WUSCHEL (WUS)-expressing organizing center in inflorescence meristems. May act by down-regulating expression of WUS. Acts as an antirepressor that counteracts EMF1 action through modulation of trimethylated 'Lys-4' on histone H3 (H3K4me3) marks on target gene loci (including genes involved in salt stress response and flower development). Collaboratively with RBL and CYP40/SQN, influences floral meristem (FM) determinacy in an AGAMOUS and SUPERMAN-dependent manner, thus contributing to the floral developmental homeostasis. The protein is Protein ULTRAPETALA 1 of Arabidopsis thaliana (Mouse-ear cress).